The sequence spans 352 residues: Protein-glutamate methylesterase/protein-glutamine glutaminase (352 aa).

The region spanning 5–122 is the Response regulatory domain; the sequence is RAIVIDDSAF…SLDIRNVEDE (118 aa). A 4-aspartylphosphate modification is found at Asp-56. Residues 163-352 enclose the CheB-type methylesterase domain; sequence RSIVSIGTST…IPSLIVKQLT (190 aa). Active-site residues include Ser-171, His-198, and Asp-294.

It belongs to the CheB family. Post-translationally, phosphorylated by CheA. Phosphorylation of the N-terminal regulatory domain activates the methylesterase activity.

Its subcellular location is the cytoplasm. The enzyme catalyses [protein]-L-glutamate 5-O-methyl ester + H2O = L-glutamyl-[protein] + methanol + H(+). The catalysed reaction is L-glutaminyl-[protein] + H2O = L-glutamyl-[protein] + NH4(+). Involved in chemotaxis. Part of a chemotaxis signal transduction system that modulates chemotaxis in response to various stimuli. Catalyzes the demethylation of specific methylglutamate residues introduced into the chemoreceptors (methyl-accepting chemotaxis proteins or MCP) by CheR. Also mediates the irreversible deamidation of specific glutamine residues to glutamic acid. In Oceanobacillus iheyensis (strain DSM 14371 / CIP 107618 / JCM 11309 / KCTC 3954 / HTE831), this protein is Protein-glutamate methylesterase/protein-glutamine glutaminase.